The chain runs to 164 residues: uncharacterized protein (164 aa).

2 helical membrane passes run F11 to L31 and C51 to V71.

Its subcellular location is the membrane. This is an uncharacterized protein from Saccharomyces cerevisiae (strain ATCC 204508 / S288c) (Baker's yeast).